The following is a 70-amino-acid chain: Small ribosomal subunit protein bS21 (70 aa).

This sequence belongs to the bacterial ribosomal protein bS21 family.

The protein is Small ribosomal subunit protein bS21 of Polaromonas naphthalenivorans (strain CJ2).